A 146-amino-acid chain; its full sequence is Bradykinin-like neuropeptide (146 aa).

The N-terminal stretch at 1 to 24 is a signal peptide; it reads MTSSIYGFITLSVVALISQTTCRS. 2 consecutive propeptides follow at residues 25-80 and 92-146; these read LDLL…LMEA and LRSY…FRYG.

As to expression, neuron L5.

It localises to the secreted. May have important functions in renal physiology and in animal behavior, as does bradykinin. In Aplysia californica (California sea hare), this protein is Bradykinin-like neuropeptide (LUQ-1).